Consider the following 422-residue polypeptide: Ameloblastin (422 aa).

An N-terminal signal peptide occupies residues 1 to 26; that stretch reads MSASKIPLFKMKGLLLFLSLVKMSLA. The residue at position 42 (Pro42) is a Hydroxyproline. Ser48 bears the Phosphoserine mark. An O-linked (GalNAc...) serine glycan is attached at Ser117. Residues 271 to 321 are disordered; that stretch reads GLNQNSPKGGDFTVEVDSPVSVTKGPEKGEGPEGSPLQEASPDKGENPALL.

This sequence belongs to the ameloblastin family. As to expression, ameloblast-specific.

It is found in the secreted. The protein resides in the extracellular space. It localises to the extracellular matrix. Functionally, involved in the mineralization and structural organization of enamel. The protein is Ameloblastin (Ambn) of Rattus norvegicus (Rat).